Consider the following 179-residue polypeptide: Interleukin-10 (179 aa).

Residues 1 to 19 (MPSSSALLCCLVFLAGVAA) form the signal peptide. Intrachain disulfides connect Cys31/Cys127 and Cys81/Cys133. N-linked (GlcNAc...) asparagine glycosylation is present at Asn135.

The protein belongs to the IL-10 family. Homodimer. Interacts with IL10RA and IL10RB.

Its subcellular location is the secreted. Major immune regulatory cytokine that acts on many cells of the immune system where it has profound anti-inflammatory functions, limiting excessive tissue disruption caused by inflammation. Mechanistically, IL10 binds to its heterotetrameric receptor comprising IL10RA and IL10RB leading to JAK1 and STAT2-mediated phosphorylation of STAT3. In turn, STAT3 translocates to the nucleus where it drives expression of anti-inflammatory mediators. Targets antigen-presenting cells (APCs) such as macrophages and monocytes and inhibits their release of pro-inflammatory cytokines including granulocyte-macrophage colony-stimulating factor /GM-CSF, granulocyte colony-stimulating factor/G-CSF, IL-1 alpha, IL-1 beta, IL-6, IL-8 and TNF-alpha. Also interferes with antigen presentation by reducing the expression of MHC-class II and co-stimulatory molecules, thereby inhibiting their ability to induce T cell activation. In addition, controls the inflammatory response of macrophages by reprogramming essential metabolic pathways including mTOR signaling. This is Interleukin-10 (IL10) from Bubalus carabanensis (Swamp type water buffalo).